A 154-amino-acid polypeptide reads, in one-letter code: NADPH-dependent 7-cyano-7-deazaguanine reductase (154 aa).

Catalysis depends on Cys-52, which acts as the Thioimide intermediate. Asp-59 acts as the Proton donor in catalysis. Substrate-binding positions include 74 to 76 (VES) and 93 to 94 (HE).

Belongs to the GTP cyclohydrolase I family. QueF type 1 subfamily.

It is found in the cytoplasm. The catalysed reaction is 7-aminomethyl-7-carbaguanine + 2 NADP(+) = 7-cyano-7-deazaguanine + 2 NADPH + 3 H(+). The protein operates within tRNA modification; tRNA-queuosine biosynthesis. In terms of biological role, catalyzes the NADPH-dependent reduction of 7-cyano-7-deazaguanine (preQ0) to 7-aminomethyl-7-deazaguanine (preQ1). The chain is NADPH-dependent 7-cyano-7-deazaguanine reductase from Rhizobium rhizogenes (strain K84 / ATCC BAA-868) (Agrobacterium radiobacter).